Here is an 805-residue protein sequence, read N- to C-terminus: U-box domain-containing protein 32 (805 aa).

2 disordered regions span residues 181-205 and 226-284; these read SNNR…SEKL and EKDT…EREG. A compositionally biased stretch (basic and acidic residues) spans 226–239; it reads EKDTGQLEREKVEP. Residues 245 to 257 are compositionally biased toward low complexity; sequence FSSGSSSSFGEPV. Positions 331–434 form a coiled coil; that stretch reads LEGLCIKESS…EVNALRRLVK (104 aa). Residues 460-718 enclose the Protein kinase domain; it reads FDPSWKLGEG…FIDRMKAPEV (259 aa). ATP contacts are provided by residues 466 to 474 and lysine 487; that span reads LGEGKYGSV. In terms of domain architecture, U-box spans 734-805; the sequence is RPPSHYLCPI…LAIQDWQNQW (72 aa).

The protein belongs to the protein kinase superfamily. Ser/Thr protein kinase family.

The enzyme catalyses S-ubiquitinyl-[E2 ubiquitin-conjugating enzyme]-L-cysteine + [acceptor protein]-L-lysine = [E2 ubiquitin-conjugating enzyme]-L-cysteine + N(6)-ubiquitinyl-[acceptor protein]-L-lysine.. Its pathway is protein modification; protein ubiquitination. Functions as an E3 ubiquitin ligase. The polypeptide is U-box domain-containing protein 32 (PUB32) (Arabidopsis thaliana (Mouse-ear cress)).